The chain runs to 172 residues: S-ribosylhomocysteine lyase (172 aa).

Positions 54, 58, and 128 each coordinate Fe cation.

It belongs to the LuxS family. In terms of assembly, homodimer. Fe cation is required as a cofactor.

It carries out the reaction S-(5-deoxy-D-ribos-5-yl)-L-homocysteine = (S)-4,5-dihydroxypentane-2,3-dione + L-homocysteine. Functionally, involved in the synthesis of autoinducer 2 (AI-2) which is secreted by bacteria and is used to communicate both the cell density and the metabolic potential of the environment. The regulation of gene expression in response to changes in cell density is called quorum sensing. Catalyzes the transformation of S-ribosylhomocysteine (RHC) to homocysteine (HC) and 4,5-dihydroxy-2,3-pentadione (DPD). The sequence is that of S-ribosylhomocysteine lyase from Aliivibrio fischeri (strain MJ11) (Vibrio fischeri).